We begin with the raw amino-acid sequence, 343 residues long: Homeobox protein DBX1 (343 aa).

Disordered regions lie at residues 56–100 (RSVP…TAFS) and 240–343 (KERE…ITVS). Positions 181-240 (GMLRRAVFSDVQRKALEKMFQKQKYISKPDRKKLAAKLGLKDSQVKIWFQNRRMKWRNSK) form a DNA-binding region, homeobox. The segment covering 314–323 (AHSSSPGKPS) has biased composition (low complexity). Over residues 326 to 343 (SDSEEEEEGEEQEEITVS) the composition is skewed to acidic residues.

Belongs to the H2.0 homeobox family.

The protein localises to the nucleus. Its function is as follows. Could have a role in patterning the central nervous system during embryogenesis. Has a key role in regulating the distinct phenotypic features that distinguish two major classes of ventral interneurons, V0 and V1 neurons. Regulates the transcription factor profile, neurotransmitter phenotype, intraspinal migratory path and axonal trajectory of V0 neurons, features that differentiate them from an adjacent set of V1 neurons. The chain is Homeobox protein DBX1 (DBX1) from Homo sapiens (Human).